The sequence spans 363 residues: Proline/serine-rich coiled-coil protein 1 (363 aa).

S22 is subject to Phosphoserine. The stretch at P38–P41 is repeat 1. A disordered region spans residues E39–G67. L42 is modified (phosphoserine). G45 bears the Phosphothreonine mark. Phosphoserine is present on residues S47, S65, S70, S98, S122, and S140. Repeat 2 spans residues P68–P71. Residues S70–Q94 are a coiled coil. Positions D95–R363 are disordered. Residues L103–P246 are 4 X 4 AA repeats of P-X-X-P. Residues P112 to V124 show a composition bias toward basic and acidic residues. The span at S133–L148 shows a compositional bias: low complexity. Position 145 is a phosphothreonine (T145). Phosphoserine occurs at positions 186 and 190. Residues S186–T196 show a composition bias toward polar residues. Low complexity predominate over residues P197 to A210. S212 is modified (phosphoserine). Position 215 is a phosphothreonine (T215). 2 repeat units span residues P238 to P241 and P243 to P246.

The protein belongs to the PSRC1 family. In terms of assembly, interacts with APC2. Interacts with KIF2A. Interacts with ANKRD53; recruits ANKRD53 to the spindle during mitosis. Phosphorylated during mitosis. In terms of tissue distribution, widely expressed in adult and fetal tissues, with highest expression in the adult brain and fetal thymus. Not detected in adult skeletal muscle.

The protein localises to the cytoplasm. It localises to the cytoskeleton. It is found in the spindle. Its subcellular location is the spindle pole. In terms of biological role, required for normal progression through mitosis. Required for normal congress of chromosomes at the metaphase plate, and for normal rate of chromosomal segregation during anaphase. Plays a role in the regulation of mitotic spindle dynamics. Increases the rate of turnover of microtubules on metaphase spindles, and contributes to the generation of normal tension across sister kinetochores. Recruits KIF2A and ANKRD53 to the mitotic spindle and spindle poles. May participate in p53/TP53-regulated growth suppression. The chain is Proline/serine-rich coiled-coil protein 1 (PSRC1) from Homo sapiens (Human).